A 673-amino-acid polypeptide reads, in one-letter code: MGYQHNRSFNKATGAGFIIAMGIVYGDIGTSPLYTMESIVQGQGGLERISETSIIGALSLIIWTLTLITTVKYVWIALKADNNHEGGIFSLFTLVRKYAKWLIIPAMIGGAALLSDGALTPAVTVTSAIEGLRSIPAFHEAFGQQQLPIVIITLAILAILFLIQRFGTSIVGKVFGPVMFIWFSFFGITGLINLFGDFSVLQAINPYWAIHLLLSPENKAGIFVLGSVFLATTGAEALYSDLGHVGRGNIHVSWPFVKVCIILSYCGQAAWLLQNRGKSLGDINPFFAVLPQSLIIFSVILATLAAIIASQALISGSFTLVSEAIRLKLLPRLRINYPGESFGQLYIPAVNLGLWLAASFIVVYFQSSAHMEAAYGLAITVTMLMTTILLTVYLAQHQKVKKVFVVLFFGAFIFIEGLFFAASAVKFLHGGYVVVILAALILFVMAIWHKSDQLFYKYLKSSNLNDYKEQMNKLRKDESYDLYHTNVVYLTAKMDKEWIDRSILYSILDKRPKKAEVYWFVKVNVTDEPYTSEYEVDMLGTDFIVCVNLYLGFHMRQEIPRYLRTIVTNLMESGRLPQQHQPYSIIPGRKVGDFRFILLEEKLINARQMPAFERFVLQTKEQIKKITASPARWFGLHFSEVTVETVPLVLSDVRNLEIHERISKENEVENLSK.

Helical transmembrane passes span 14 to 34 (GAGFIIAMGIVYGDIGTSPLY), 58 to 78 (LSLIIWTLTLITTVKYVWIAL), 101 to 121 (WLIIPAMIGGAALLSDGALTP), 147 to 167 (LPIVIITLAILAILFLIQRFG), 175 to 195 (FGPVMFIWFSFFGITGLINLF), 196 to 216 (GDFSVLQAINPYWAIHLLLSP), 220 to 240 (AGIFVLGSVFLATTGAEALYS), 252 to 272 (VSWPFVKVCIILSYCGQAAWL), 294 to 314 (LIIFSVILATLAAIIASQALI), 345 to 365 (LYIPAVNLGLWLAASFIVVYF), 374 to 394 (AYGLAITVTMLMTTILLTVYL), 403 to 423 (VFVVLFFGAFIFIEGLFFAAS), and 427 to 447 (FLHGGYVVVILAALILFVMAI).

This sequence belongs to the HAK/KUP transporter (TC 2.A.72) family.

The protein localises to the cell membrane. The catalysed reaction is K(+)(in) + H(+)(in) = K(+)(out) + H(+)(out). Its function is as follows. Transport of potassium into the cell. Likely operates as a K(+):H(+) symporter. This chain is Probable potassium transport system protein Kup 1, found in Lactococcus lactis subsp. cremoris (strain SK11).